Consider the following 107-residue polypeptide: Anti-adapter protein IraM (107 aa).

Belongs to the IraM/RssC family.

The protein localises to the cytoplasm. Functionally, inhibits RpoS proteolysis by regulating RssB activity, thereby increasing the stability of the sigma stress factor RpoS during magnesium starvation. The sequence is that of Anti-adapter protein IraM from Escherichia coli (strain 55989 / EAEC).